Reading from the N-terminus, the 517-residue chain is Ribonuclease Y (517 aa).

The helical transmembrane segment at 4-24 (LIYIVILFVGIAAGAFFGISV) threads the bilayer. Residues 207–267 (TISTVALPND…LRREVARRTI (61 aa)) enclose the KH domain. Residues 333 to 426 (VLAHSVEVAQ…VAAADAISAA (94 aa)) form the HD domain.

Belongs to the RNase Y family.

It is found in the cell membrane. In terms of biological role, endoribonuclease that initiates mRNA decay. The chain is Ribonuclease Y from Fervidobacterium nodosum (strain ATCC 35602 / DSM 5306 / Rt17-B1).